Reading from the N-terminus, the 331-residue chain is Light-harvesting complex I LH35 proteins (331 aa).

The protein localises to the plastid. Its subcellular location is the chloroplast. The protein is Light-harvesting complex I LH35 proteins of Euglena gracilis.